Here is a 958-residue protein sequence, read N- to C-terminus: Nuclear factor NF-kappa-B p100 subunit (958 aa).

Residues 40–230 (LLMSYLSIIE…DPIHDSKSPG (191 aa)) enclose the RHD domain. The short motif at 343 to 347 (RKRRK) is the Nuclear localization signal element. Disordered stretches follow at residues 350–374 (PTFNNHFYGGGSPMGGAPPGSSFGQ) and 411–442 (CSATNSSEKNQQPSISIKKEGEEASACSQTDS). Positions 352–390 (FNNHFYGGGSPMGGAPPGSSFGQGGGSNINYQYTGMNSA) are GRR. Residues 357 to 374 (YGGGSPMGGAPPGSSFGQ) show a composition bias toward gly residues. The segment covering 412 to 425 (SATNSSEKNQQPSI) has biased composition (polar residues). ANK repeat units lie at residues 500 to 529 (NGDTPLHLAVIHGQSSVIEQLVQIILSIPN), 539 to 568 (LQQTPLHLGVITKQYSVVAFLLKAGADPTI), 572 to 603 (YGNSVLHLAVQSEDDKMLGVLLKYPSVGQKNL), 610 to 639 (HGLSPVHWSVKMKNEKCLVLLVKAGANVNS), 644 to 674 (SGKSPLHIAVEMDNLNLAVFLVKKLHADINA), and 678 to 707 (GGNTPLHLAASRGSPMLTRMLVNEGANVLS). The interval 705–766 (VLSENDEPVN…SAEEMHRREQ (62 aa)) is disordered. The span at 724–734 (SESDSDVQMDT) shows a compositional bias: acidic residues. The segment covering 753-766 (ECEHSAEEMHRREQ) has biased composition (basic and acidic residues). In terms of domain architecture, Death spans 815 to 901 (VNVLALETNT…EGVELLCKSE (87 aa)). Positions 904 to 916 (AKHHSPAESKNDS) are enriched in basic and acidic residues. The segment at 904–958 (AKHHSPAESKNDSAYESQSMEVDQSSGNLMDDSQKQTIPVSAAELCPTTEPTIGQ) is disordered. A compositionally biased stretch (polar residues) spans 917–931 (AYESQSMEVDQSSGN).

In terms of assembly, active NF-kappa-B is a heterodimer of an about 52 kDa DNA-binding subunit and the weak DNA-binding subunit p65. Two heterodimers might form a labile tetramer. While translation occurs, the particular unfolded structure after the GRR repeat promotes the generation of p52 making it an acceptable substrate for the proteasome. This process is known as cotranslational processing. The processed form is active and the unprocessed form acts as an inhibitor (I kappa B-like), being able to form cytosolic complexes with NF-kappa B, trapping it in the cytoplasm. Complete folding of the region downstream of the GRR repeat precludes processing. Post-translationally, constitutive processing is tightly suppressed by its C-terminal processing inhibitory domain, named PID, which contains the death domain. In terms of tissue distribution, expressed in spleen.

Its subcellular location is the nucleus. The protein localises to the cytoplasm. Appears to have dual functions such as cytoplasmic retention of attached NF-kappa-B proteins and generation of p52 by a cotranslational processing. The proteasome-mediated process ensures the production of both p52 and p100 and preserves their independent function. p52 binds to the kappa-B consensus sequence 5'-GGRNNYYCC-3', located in the enhancer region of genes involved in immune response and acute phase reactions. In concert with RELB, may play a role in the regulation of the circadian clock. This is Nuclear factor NF-kappa-B p100 subunit (nfkb2) from Xenopus laevis (African clawed frog).